Consider the following 552-residue polypeptide: MSAIALTVSMLALVAVLGLWIGNWKIYGVGLGIGGVLFGGIIVGHFAQTYQIVLNGDMLHFIQEFGLILFVYTIGIQVGPGFFSSLRVSGLRLNCFAILMVVVGGLVTAIIHKLFAVPLPIILGVFSGAVTNTPALGAAQQILTDLGSPPQLVSQMGMGYAMAYPFGICGILLVMWLIRLFFKINIDREAKAFDSSYGQNRELLQTMNVAVRNPNLHGLSVQDVPLLNSDEVVCSRLKRGDLLMVPMPATVIEIGDYLHLVGQRDALEKVRLVVGEEVDVTLSTAGTALQTARVVVTNEAVLGKKIRDLNLKQKYDVVITRLNRAGIELVASNSASLQFGDILNLVGRPEAIEAVSAIVGNAQQKLQQVQMLPVFIGVGLGVLLGSIPLFVPGFPAALRLGLAGGPLVVALILGRIGSIGKLYWFMPPSANLALRELGIVLFLSVVGLKSGGDFINTLVNGDGLAWIGYGAMITGIPLLTVGILARMLVKMNYLTLCGMLAGSMTDPPALAFANGLHPTSGAAALSYATVYPLAMFLRIMSPQILAVLFWTL.

Transmembrane regions (helical) follow at residues 1–21, 26–46, 65–85, 96–116, 119–139, and 158–178; these read MSAI…GLWI, IYGV…VGHF, FGLI…FFSS, FAIL…KLFA, LPII…LGAA, and MGYA…MWLI. RCK C-terminal domains are found at residues 192–276 and 279–361; these read AFDS…VVGE and DVTL…IVGN. 6 helical membrane-spanning segments follow: residues 371–391, 393–413, 439–459, 464–484, 493–513, and 530–550; these read MLPV…PLFV, GFPA…ALIL, IVLF…NTLV, LAWI…VGIL, YLTL…LAFA, and VYPL…VLFW.

Belongs to the AAE transporter (TC 2.A.81) family. YidE subfamily.

The protein resides in the cell membrane. The polypeptide is Putative transport protein YPN_3727 (Yersinia pestis bv. Antiqua (strain Nepal516)).